The sequence spans 179 residues: NADH:FAD oxidoreductase (179 aa).

Residue 48 to 51 coordinates FAD; that stretch reads TCSA. An NAD(+)-binding site is contributed by 54–57; the sequence is SVCD. FAD is bound by residues 65–71, Ala-99, 104–109, and Ser-144; these read CINRKSY and VPMEER. Residues His-145 and 166–169 contribute to the NAD(+) site; that span reads YHRR. Position 166 (Tyr-166) interacts with FAD.

It belongs to the non-flavoprotein flavin reductase family. In terms of assembly, homodimer. The chlorophenol-4-monooxygenase is composed of an oxygenase component TftD and a reductase component TftC.

It carries out the reaction FADH2 + NAD(+) = FAD + NADH + 2 H(+). It participates in xenobiotic degradation. Its function is as follows. Reductase component of a two-component system that degrades 2,4,5-trichlorophenol. TftC provides the FADH(2) required by TftD. TftD oxidizes 2,4,5-trichlorophenol (2,4,5-TCP) to 2,5-dichloro-p-benzoquinone, which is chemically reduced to 2,5-dichloro-p-hydroquinone (2,5-DiCHQ). Then, TftD oxidizes the latter to 5-chloro-2-hydroxy-p-benzoquinone. This Burkholderia cepacia (Pseudomonas cepacia) protein is NADH:FAD oxidoreductase (tftC).